The chain runs to 365 residues: Histidinol-phosphate aminotransferase (365 aa).

Lysine 220 is modified (N6-(pyridoxal phosphate)lysine).

It belongs to the class-II pyridoxal-phosphate-dependent aminotransferase family. Histidinol-phosphate aminotransferase subfamily. As to quaternary structure, homodimer. It depends on pyridoxal 5'-phosphate as a cofactor.

The catalysed reaction is L-histidinol phosphate + 2-oxoglutarate = 3-(imidazol-4-yl)-2-oxopropyl phosphate + L-glutamate. Its pathway is amino-acid biosynthesis; L-histidine biosynthesis; L-histidine from 5-phospho-alpha-D-ribose 1-diphosphate: step 7/9. In Xylella fastidiosa (strain Temecula1 / ATCC 700964), this protein is Histidinol-phosphate aminotransferase (hisC).